Reading from the N-terminus, the 272-residue chain is MSLQFLRSEASDGAGETSDASSADFLLDPQTATHLARLTGRPCNRLIYRTALTHRSVLHDHHSEEHKPESNQRLEFLGDAVLDLLISEHLFKQFPGSDEGHLSSNRAKIVNRKSLAAFALELQLGEHLIIGESADKQKIRTSESALADALEALVGAIYLDQGLAGAERFITNHVIAKVDLHKLVEAEYNYKSRLIEYTQSRQLPPPLYTVITEEGAEHEKTFVVEVSCNGQPLGRGTAPRKKDAEQLAAKEAMKRLESGDLGNLNEPSPQNS.

The tract at residues 1–22 (MSLQFLRSEASDGAGETSDASS) is disordered. The 132-residue stretch at 31–162 (TATHLARLTG…LVGAIYLDQG (132 aa)) folds into the RNase III domain. A Mg(2+)-binding site is contributed by Glu75. The active site involves Asp79. Residues Asp148 and Glu151 each contribute to the Mg(2+) site. Glu151 is a catalytic residue. One can recognise a DRBM domain in the interval 189–258 (NYKSRLIEYT…AKEAMKRLES (70 aa)).

Belongs to the ribonuclease III family. As to quaternary structure, homodimer. The cofactor is Mg(2+).

The protein resides in the cytoplasm. The enzyme catalyses Endonucleolytic cleavage to 5'-phosphomonoester.. Functionally, digests double-stranded RNA. Involved in the processing of primary rRNA transcript to yield the immediate precursors to the large and small rRNAs (23S and 16S). Processes some mRNAs, and tRNAs when they are encoded in the rRNA operon. Processes pre-crRNA and tracrRNA of type II CRISPR loci if present in the organism. The sequence is that of Ribonuclease 3 from Chlorobaculum tepidum (strain ATCC 49652 / DSM 12025 / NBRC 103806 / TLS) (Chlorobium tepidum).